The chain runs to 363 residues: Mitochondrial phosphate carrier protein 2, mitochondrial (363 aa).

The chain crosses the membrane as a helical span at residues 65 to 85 (AYFAACTVAGMLSCGITHTAI). 3 Solcar repeats span residues 65–149 (AYFA…AKKY), 162–246 (YKTL…TVEL), and 263–342 (VQLG…VKVL). Residues 86-123 (TPLDVIKCNMQIDPLKYKNITSAFKTTIKEQGLKGFTR) are Mitochondrial matrix-facing. The helical transmembrane segment at 124-143 (GWSPTLLGYSAQGAFKYGLY) threads the bilayer. The Mitochondrial intermembrane portion of the chain corresponds to 144–164 (EYAKKYYSDIVGPEYAAKYKT). Residues 165-185 (LIYLAGSASAEIVADVALCPM) traverse the membrane as a helical segment. Topologically, residues 186-220 (EAVKVRVQTQPGFARGLSDGLPKIIKSEGFRGLHK) are mitochondrial matrix. A helical membrane pass occupies residues 221–240 (GLVPLWGRQIPYTMMKFATF). The Mitochondrial intermembrane segment spans residues 241 to 261 (ENTVELIYKKVMPTPKEECSK). The helical transmembrane segment at 262-282 (PVQLGVSFAGGYIAGIFCAII) threads the bilayer. At 283-321 (SHPADNLVSFLNNSKGATVADAVKRLGLWGMLTRGLPLR) the chain is on the mitochondrial matrix side. A helical membrane pass occupies residues 322–342 (IFMIGTLTGAQWVIYDAVKVL). Over 343–363 (AGLPTTGGASPATALAPSVSA) the chain is Mitochondrial intermembrane.

Belongs to the mitochondrial carrier (TC 2.A.29) family. In terms of tissue distribution, expressed in leaves. Strong expression in senescent leaves.

The protein resides in the mitochondrion inner membrane. Transport of phosphate groups from the cytosol to the mitochondrial matrix. Mediates salt stress tolerance through an ATP-dependent pathway and via modulation of the gibberellin metabolism. The polypeptide is Mitochondrial phosphate carrier protein 2, mitochondrial (MPT2) (Arabidopsis thaliana (Mouse-ear cress)).